Reading from the N-terminus, the 198-residue chain is Suppressor of cytokine signaling 2 (198 aa).

Residues 1-29 (MTLRCLEPSGNGADRTRSQWGTAGLPEEQ) are disordered. Residues 1 to 75 (MTLRCLEPSG…PEGTFLIRDS (75 aa)) are interaction with AREL1. At Ser30 the chain carries Phosphoserine. An SH2 domain is found at 48-156 (WYWGSMTVNE…TVHLYLTKPL (109 aa)). Ser52 is modified (phosphoserine; by PKC). The 47-residue stretch at 151 to 197 (YLTKPLYTSAPTLQHFCRLAINKCTGTIWGLPLPTRLKDYLEEYKFQ) folds into the SOCS box domain. A Glycyl lysine isopeptide (Lys-Gly) (interchain with G-Cter in ubiquitin) cross-link involves residue Lys173.

In terms of assembly, substrate-recognition component of the ECS(SOCS2) complex, composed of SOCS2, CUL5, ELOB, ELOC and RNF7/RBX2. Interacts with IGF1R. Interacts with DCUN1D1. Post-translationally, ubiquitinated; mediated by AREL1 and leading to its subsequent proteasomal degradation. Ubiquitination is dependent on phosphorylation at Ser-52, by PKC and is stimulated by LPS. In terms of processing, phosphorylation at Ser-52 by PKC facilitates its ubiquitination and proteasomal degradation. In terms of tissue distribution, expressed primarily in the testis, some expression in liver and lung.

It localises to the cytoplasm. It participates in protein modification; protein ubiquitination. Its function is as follows. Substrate-recognition component of a cullin-5-RING E3 ubiquitin-protein ligase complex (ECS complex, also named CRL5 complex), which mediates the ubiquitination and subsequent proteasomal degradation of target proteins, such as EPOR and GHR. Specifically recognizes and binds phosphorylated proteins via its SH2 domain, promoting their ubiquitination. The ECS(SOCS2) complex acts as a key regulator of growth hormone receptor (GHR) levels by mediating ubiquitination and degradation of GHR, following GHR phosphorylation by JAK2. The ECS(SOCS2) also catalyzes ubiquitination and degradation of JAK2-phosphorylated EPOR. The chain is Suppressor of cytokine signaling 2 from Mus musculus (Mouse).